Here is a 190-residue protein sequence, read N- to C-terminus: Potassium-transporting ATPase KdpC subunit (190 aa).

Residues 10-30 form a helical membrane-spanning segment; it reads TFLFLLLITGGVYPLLTTALG.

Belongs to the KdpC family. The system is composed of three essential subunits: KdpA, KdpB and KdpC.

The protein resides in the cell inner membrane. In terms of biological role, part of the high-affinity ATP-driven potassium transport (or Kdp) system, which catalyzes the hydrolysis of ATP coupled with the electrogenic transport of potassium into the cytoplasm. This subunit acts as a catalytic chaperone that increases the ATP-binding affinity of the ATP-hydrolyzing subunit KdpB by the formation of a transient KdpB/KdpC/ATP ternary complex. The chain is Potassium-transporting ATPase KdpC subunit from Shigella flexneri serotype 5b (strain 8401).